Reading from the N-terminus, the 561-residue chain is Sesquiterpene synthase TPS2 (561 aa).

A disordered region spans residues Ala6–Ile26. Arg277, Asp314, Asp318, Arg455, and Asp458 together coordinate (2E,6E)-farnesyl diphosphate. Mg(2+) is bound by residues Asp314 and Asp318. Positions Asp314 to Asp318 match the DDXXD motif motif. Mg(2+) is bound by residues Asp458, Ser462, and Glu466.

This sequence belongs to the terpene synthase family. Tpsa subfamily. As to quaternary structure, monomer. It depends on Mg(2+) as a cofactor.

The protein resides in the cytoplasm. The catalysed reaction is (2E,6E)-farnesyl diphosphate = beta-ylangene + diphosphate. It catalyses the reaction (2E,6E)-farnesyl diphosphate = beta-copaene + diphosphate. It carries out the reaction (2E,6E)-farnesyl diphosphate = beta-cubebene + diphosphate. Its pathway is secondary metabolite biosynthesis; terpenoid biosynthesis. Functionally, sesquiterpene synthase involved in the biosynthesis of volatile organic compounds. Mediates the conversion of (2E,6E)-farnesyl diphosphate (FPP) into beta-ylangene, beta-copaene and beta-cubebene. Does not use (2E)-geranyl diphosphate (GPP) as substrate. The chain is Sesquiterpene synthase TPS2 from Cananga odorata (Ylang-ylang tree).